A 334-amino-acid polypeptide reads, in one-letter code: Holliday junction branch migration complex subunit RuvB (334 aa).

The interval Met-1–Tyr-182 is large ATPase domain (RuvB-L). ATP is bound by residues Leu-21, Arg-22, Gly-63, Lys-66, Thr-67, Thr-68, Glu-129–Phe-131, Arg-172, Tyr-182, and Arg-219. Position 67 (Thr-67) interacts with Mg(2+). The interval Glu-183–Gln-253 is small ATPAse domain (RuvB-S). A head domain (RuvB-H) region spans residues Lys-256–Asp-334. 2 residues coordinate DNA: Arg-311 and Arg-316.

The protein belongs to the RuvB family. In terms of assembly, homohexamer. Forms an RuvA(8)-RuvB(12)-Holliday junction (HJ) complex. HJ DNA is sandwiched between 2 RuvA tetramers; dsDNA enters through RuvA and exits via RuvB. An RuvB hexamer assembles on each DNA strand where it exits the tetramer. Each RuvB hexamer is contacted by two RuvA subunits (via domain III) on 2 adjacent RuvB subunits; this complex drives branch migration. In the full resolvosome a probable DNA-RuvA(4)-RuvB(12)-RuvC(2) complex forms which resolves the HJ.

It localises to the cytoplasm. It catalyses the reaction ATP + H2O = ADP + phosphate + H(+). In terms of biological role, the RuvA-RuvB-RuvC complex processes Holliday junction (HJ) DNA during genetic recombination and DNA repair, while the RuvA-RuvB complex plays an important role in the rescue of blocked DNA replication forks via replication fork reversal (RFR). RuvA specifically binds to HJ cruciform DNA, conferring on it an open structure. The RuvB hexamer acts as an ATP-dependent pump, pulling dsDNA into and through the RuvAB complex. RuvB forms 2 homohexamers on either side of HJ DNA bound by 1 or 2 RuvA tetramers; 4 subunits per hexamer contact DNA at a time. Coordinated motions by a converter formed by DNA-disengaged RuvB subunits stimulates ATP hydrolysis and nucleotide exchange. Immobilization of the converter enables RuvB to convert the ATP-contained energy into a lever motion, pulling 2 nucleotides of DNA out of the RuvA tetramer per ATP hydrolyzed, thus driving DNA branch migration. The RuvB motors rotate together with the DNA substrate, which together with the progressing nucleotide cycle form the mechanistic basis for DNA recombination by continuous HJ branch migration. Branch migration allows RuvC to scan DNA until it finds its consensus sequence, where it cleaves and resolves cruciform DNA. The sequence is that of Holliday junction branch migration complex subunit RuvB from Bacillus pumilus (strain SAFR-032).